A 270-amino-acid polypeptide reads, in one-letter code: MNRYENIFDRLSQRKEGCFVPFVVLGDPSLDTSLKIINILIQNGADALELGIPFSDPLADGKTIQKANLRALSQKNNIFQYFKEIKNLRKKHTQIPIGLLIYANLVYNQGLDNFYLKCRKSGVDSVLIADVPIEESEIFYTTANKYKISSIFICPPNADDDLLYRISLYAKGYIYVLSRPGVTGIENQNFFVSGDFIKKIKKYNSVPLLQGFGISNSIQVKQAISSGLSGVICGSAIINIIEKYLYEEDIMMTKIQEFVKHLKKSTKLIA.

Residues glutamate 49 and aspartate 60 each act as proton acceptor in the active site.

Belongs to the TrpA family. As to quaternary structure, tetramer of two alpha and two beta chains.

The enzyme catalyses (1S,2R)-1-C-(indol-3-yl)glycerol 3-phosphate + L-serine = D-glyceraldehyde 3-phosphate + L-tryptophan + H2O. Its pathway is amino-acid biosynthesis; L-tryptophan biosynthesis; L-tryptophan from chorismate: step 5/5. The alpha subunit is responsible for the aldol cleavage of indoleglycerol phosphate to indole and glyceraldehyde 3-phosphate. The sequence is that of Tryptophan synthase alpha chain from Buchnera aphidicola subsp. Diuraphis noxia.